A 77-amino-acid chain; its full sequence is ATP synthase subunit 9, mitochondrial (77 aa).

The next 2 membrane-spanning stretches (helical) occupy residues 8–28 (MGAG…GNVL) and 45–72 (LFGY…LISF).

This sequence belongs to the ATPase C chain family. F-type ATPases have 2 components, CF(1) - the catalytic core - and CF(0) - the membrane proton channel. CF(1) has five subunits: alpha(3), beta(3), gamma(1), delta(1), epsilon(1). CF(0) has three main subunits: a, b and c.

It is found in the mitochondrion membrane. This protein is one of the chains of the nonenzymatic membrane component (F0) of mitochondrial ATPase. This Petunia sp. (Petunia) protein is ATP synthase subunit 9, mitochondrial (ATP9).